A 40-amino-acid chain; its full sequence is Photosystem II reaction center protein J (40 aa).

The helical transmembrane segment at 8–28 threads the bilayer; the sequence is IPLWVVATIAGLGVITVVGIF.

The protein belongs to the PsbJ family. As to quaternary structure, PSII is composed of 1 copy each of membrane proteins PsbA, PsbB, PsbC, PsbD, PsbE, PsbF, PsbH, PsbI, PsbJ, PsbK, PsbL, PsbM, PsbT, PsbX, PsbY, PsbZ, Psb30/Ycf12, peripheral proteins PsbO, CyanoQ (PsbQ), PsbU, PsbV and a large number of cofactors. It forms dimeric complexes.

The protein resides in the cellular thylakoid membrane. Functionally, one of the components of the core complex of photosystem II (PSII). PSII is a light-driven water:plastoquinone oxidoreductase that uses light energy to abstract electrons from H(2)O, generating O(2) and a proton gradient subsequently used for ATP formation. It consists of a core antenna complex that captures photons, and an electron transfer chain that converts photonic excitation into a charge separation. This chain is Photosystem II reaction center protein J, found in Nostoc sp. (strain PCC 7120 / SAG 25.82 / UTEX 2576).